Reading from the N-terminus, the 392-residue chain is Probable tRNA sulfurtransferase (392 aa).

The 108-residue stretch at 61 to 168 (DEALKLLSKV…EFTYIYSEII (108 aa)) folds into the THUMP domain. ATP is bound by residues 185-186 (LL), 210-211 (HF), Arg-267, Gly-289, and Gln-298.

It belongs to the ThiI family.

The protein resides in the cytoplasm. The catalysed reaction is [ThiI sulfur-carrier protein]-S-sulfanyl-L-cysteine + a uridine in tRNA + 2 reduced [2Fe-2S]-[ferredoxin] + ATP + H(+) = [ThiI sulfur-carrier protein]-L-cysteine + a 4-thiouridine in tRNA + 2 oxidized [2Fe-2S]-[ferredoxin] + AMP + diphosphate. The enzyme catalyses [ThiS sulfur-carrier protein]-C-terminal Gly-Gly-AMP + S-sulfanyl-L-cysteinyl-[cysteine desulfurase] + AH2 = [ThiS sulfur-carrier protein]-C-terminal-Gly-aminoethanethioate + L-cysteinyl-[cysteine desulfurase] + A + AMP + 2 H(+). It participates in cofactor biosynthesis; thiamine diphosphate biosynthesis. Its function is as follows. Catalyzes the ATP-dependent transfer of a sulfur to tRNA to produce 4-thiouridine in position 8 of tRNAs, which functions as a near-UV photosensor. Also catalyzes the transfer of sulfur to the sulfur carrier protein ThiS, forming ThiS-thiocarboxylate. This is a step in the synthesis of thiazole, in the thiamine biosynthesis pathway. The sulfur is donated as persulfide by IscS. This is Probable tRNA sulfurtransferase from Acetivibrio thermocellus (strain ATCC 27405 / DSM 1237 / JCM 9322 / NBRC 103400 / NCIMB 10682 / NRRL B-4536 / VPI 7372) (Clostridium thermocellum).